A 730-amino-acid polypeptide reads, in one-letter code: Transient receptor potential cation channel subfamily V member 5 (730 aa).

Residues 1–327 (MGACPPKAKG…SFKWKKYGRP (327 aa)) lie on the Cytoplasmic side of the membrane. ANK repeat units lie at residues 44–74 (IRDS…DFQQ), 78–107 (VGET…ELAK), 116–145 (VGQT…SVSA), 162–191 (YGEH…DIRA), 195–228 (LGNT…HSDH), and 239–268 (QGLT…HVQW). A helical transmembrane segment spans residues 328–348 (YFCVLASLYILYMICFTTCCI). At 349 to 385 (YRPLKLRDDNRTDPRDITILQQKLLQEAYVTHQDNIR) the chain is on the extracellular side. N-linked (GlcNAc...) asparagine glycosylation occurs at asparagine 358. The chain crosses the membrane as a helical span at residues 386 to 408 (LVGELVTVTGAVIILLLEIPDIF). Residues 409–419 (RVGASRYFGQT) are Cytoplasmic-facing. The chain crosses the membrane as a helical span at residues 420-442 (ILGGPFHVIIITYASLVLLTMVM). Residues 443–448 (RLTNMN) are Extracellular-facing. Residues 449-469 (GEVVPLSFALVLGWCSVMYFA) form a helical membrane-spanning segment. Residues 470–492 (RGFQMLGPFTIMIQKMIFGDLMR) lie on the Cytoplasmic side of the membrane. Residues 493-513 (FCWLMAVVILGFASAFHITFQ) form a helical membrane-spanning segment. An intramembrane region (pore-forming) is located at residues 524 to 544 (SDYPTALFSTFELFLTIIDGP). Position 542 (aspartate 542) interacts with Ca(2+). A helical membrane pass occupies residues 557 to 577 (ITYAAFAIIATLLMLNLFIAM). At 578 to 730 (MGDTHWRVAQ…EGDGEEVYHF (153 aa)) the chain is on the cytoplasmic side. Residues 598–602 (VATTV) form an interaction with S100A10 region. Residues 650–653 (AFKC) are involved in Ca(2+)-dependent inactivation. At threonine 685 the chain carries Phosphothreonine. The residue at position 689 (serine 689) is a Phosphoserine. The tract at residues 701-730 (GWEILRRNTLGHLNLGLDLGEGDGEEVYHF) is involved in Ca(2+)-dependent inactivation.

Belongs to the transient receptor (TC 1.A.4) family. TrpV subfamily. TRPV5 sub-subfamily. Homotetramer. Probably forms heterotetramers with TRPV6. Interacts with TRPV6. Interacts with S100A10 and probably with the ANAX2-S100A10 heterotetramer. The interaction with S100A10 is required for the trafficking to the plasma membrane. Interacts with calmodulin. Interacts with BSPRY, which results in its inactivation. Post-translationally, glycosylated. As to expression, detected in kidney cortex, in distal convoluted tubules and cortical collecting ducts (at protein level). Detected in duodenum, jejunum, ileum, kidney and placenta.

Its subcellular location is the cell membrane. It localises to the apical cell membrane. The catalysed reaction is Ca(2+)(in) = Ca(2+)(out). Its activity is regulated as follows. Activated by WNK3. In terms of biological role, constitutively active calcium selective cation channel thought to be involved in Ca(2+) reabsorption in kidney and intestine. Required for normal Ca(2+) reabsorption in the kidney distal convoluted tubules. The channel is activated by low internal calcium level and the current exhibits an inward rectification. A Ca(2+)-dependent feedback regulation includes fast channel inactivation and slow current decay. Heteromeric assembly with TRPV6 seems to modify channel properties. TRPV5-TRPV6 heteromultimeric concatemers exhibit voltage-dependent gating. The protein is Transient receptor potential cation channel subfamily V member 5 (Trpv5) of Oryctolagus cuniculus (Rabbit).